We begin with the raw amino-acid sequence, 378 residues long: Queuine tRNA-ribosyltransferase (378 aa).

D89 acts as the Proton acceptor in catalysis. Substrate contacts are provided by residues 89–93 (DSGGF), D143, Q187, and G214. An RNA binding region spans residues 245–251 (GVGKPED). D264 acts as the Nucleophile in catalysis. The tract at residues 269–273 (TRNAR) is RNA binding; important for wobble base 34 recognition. Residues C302, C304, C307, and H333 each coordinate Zn(2+).

This sequence belongs to the queuine tRNA-ribosyltransferase family. Homodimer. Within each dimer, one monomer is responsible for RNA recognition and catalysis, while the other monomer binds to the replacement base PreQ1. Requires Zn(2+) as cofactor.

The enzyme catalyses 7-aminomethyl-7-carbaguanine + guanosine(34) in tRNA = 7-aminomethyl-7-carbaguanosine(34) in tRNA + guanine. It participates in tRNA modification; tRNA-queuosine biosynthesis. Catalyzes the base-exchange of a guanine (G) residue with the queuine precursor 7-aminomethyl-7-deazaguanine (PreQ1) at position 34 (anticodon wobble position) in tRNAs with GU(N) anticodons (tRNA-Asp, -Asn, -His and -Tyr). Catalysis occurs through a double-displacement mechanism. The nucleophile active site attacks the C1' of nucleotide 34 to detach the guanine base from the RNA, forming a covalent enzyme-RNA intermediate. The proton acceptor active site deprotonates the incoming PreQ1, allowing a nucleophilic attack on the C1' of the ribose to form the product. After dissociation, two additional enzymatic reactions on the tRNA convert PreQ1 to queuine (Q), resulting in the hypermodified nucleoside queuosine (7-(((4,5-cis-dihydroxy-2-cyclopenten-1-yl)amino)methyl)-7-deazaguanosine). This is Queuine tRNA-ribosyltransferase from Aeromonas hydrophila subsp. hydrophila (strain ATCC 7966 / DSM 30187 / BCRC 13018 / CCUG 14551 / JCM 1027 / KCTC 2358 / NCIMB 9240 / NCTC 8049).